Consider the following 317-residue polypeptide: NAC domain-containing protein 19 (317 aa).

One can recognise an NAC domain in the interval 14 to 162 (LPPGFRFYPT…DWVLCRIYKK (149 aa)).

In terms of assembly, dimer. Interacts with RHA2A, RHA2B or RHG1A, but not with RHA3A or RHA3B. In terms of tissue distribution, expressed in stems, flowers, cauline leaves and rosettes.

The protein resides in the nucleus. Transcription factors that bind specifically to the 5'-CATGTG-3' motif. This chain is NAC domain-containing protein 19 (NAC019), found in Arabidopsis thaliana (Mouse-ear cress).